A 328-amino-acid chain; its full sequence is Putative lipase LIH1 (328 aa).

S181 functions as the Nucleophile in the catalytic mechanism. Active-site charge relay system residues include D253 and H315.

This sequence belongs to the AB hydrolase superfamily. Lipase family.

The enzyme catalyses a triacylglycerol + H2O = a diacylglycerol + a fatty acid + H(+). Its function is as follows. Lipases catalyze the hydrolysis of the ester bond of tri-, di- and monoglycerides of long-chain fatty acids into fatty acids and glycerol. In Saccharomyces cerevisiae (strain ATCC 204508 / S288c) (Baker's yeast), this protein is Putative lipase LIH1.